A 1610-amino-acid chain; its full sequence is Adenylate cyclase type 10 (1610 aa).

2 consecutive Guanylate cyclase domains span residues 42 to 179 and 293 to 418; these read VLMF…RLAQ and TIVF…ARMM. Mg(2+)-binding residues include D47 and I48. 47–52 contributes to the ATP binding site; the sequence is DISGFT. K95 provides a ligand contact to hydrogencarbonate. Mg(2+) is bound at residue D99. 2 residues coordinate ATP: D99 and K144. The hydrogencarbonate site is built by V167, R176, and M337. ATP contacts are provided by residues V406 and 412–416; that span reads NIAAR.

The protein belongs to the adenylyl cyclase class-4/guanylyl cyclase family. It depends on Mg(2+) as a cofactor. Mn(2+) serves as cofactor.

It is found in the cell membrane. The protein resides in the cytoplasm. The protein localises to the cytoskeleton. Its subcellular location is the perinuclear region. It localises to the nucleus. It is found in the cell projection. The protein resides in the cilium. The enzyme catalyses ATP = 3',5'-cyclic AMP + diphosphate. Activated by manganese or magnesium ions. In the presence of magnesium ions, the enzyme is activated by bicarbonate. Calcium mildly increases the enzyme activity, also in the presence of magnesium ions. In terms of biological role, catalyzes the formation of the signaling molecule cAMP. May function as sensor that mediates responses to changes in cellular bicarbonate and CO(2) levels. Has a critical role in mammalian spermatogenesis by producing the cAMP which regulates cAMP-responsive nuclear factors indispensable for sperm maturation in the epididymis. Induces capacitation, the maturational process that sperm undergo prior to fertilization. Involved in ciliary beat regulation. The chain is Adenylate cyclase type 10 (ADCY10) from Oryctolagus cuniculus (Rabbit).